Here is a 177-residue protein sequence, read N- to C-terminus: uncharacterized protein (177 aa).

Residues 1-175 (MYKNPYGLEI…VFKSIFNSIL (175 aa)) enclose the Macro domain.

This is an uncharacterized protein from Saccharolobus solfataricus (strain ATCC 35092 / DSM 1617 / JCM 11322 / P2) (Sulfolobus solfataricus).